The sequence spans 130 residues: Small ribosomal subunit protein uS9 (130 aa).

Belongs to the universal ribosomal protein uS9 family. Part of the 30S ribosomal subunit.

The sequence is that of Small ribosomal subunit protein uS9 (rpsI) from Bacillus subtilis (strain 168).